The following is a 284-amino-acid chain: MKKVLIVLSIEKPNAKKICKEIEAFLSAKGIDSFVYKYDGISHSPELNEDYDLAISLGGDGTVLFTARYSAPRHIPVFPINLGRFGFIANIEPKEWEGELLHLLNGKQALHKRMLLSASINRKNKEIVKYEALNDAVVSGSGIAKLINLDISFNGISFGVFRADGVIVSTPTGSTAYSAASGGPILDPDVSAFVLTPISPFSLSNRPLVLPSSGQMKIKILPARAKDIIVSIDGQEMVSLQEDDEIIISESPNKVKMAGCSPDNFYKALRSKLGWSGSSSPKLN.

The active-site Proton acceptor is the aspartate 60. NAD(+) is bound by residues aspartate 60–glycine 61, asparagine 134–aspartate 135, lysine 145, arginine 162, aspartate 164, and glutamine 235.

It belongs to the NAD kinase family. It depends on a divalent metal cation as a cofactor.

The protein localises to the cytoplasm. The enzyme catalyses NAD(+) + ATP = ADP + NADP(+) + H(+). Involved in the regulation of the intracellular balance of NAD and NADP, and is a key enzyme in the biosynthesis of NADP. Catalyzes specifically the phosphorylation on 2'-hydroxyl of the adenosine moiety of NAD to yield NADP. The polypeptide is NAD kinase (Treponema denticola (strain ATCC 35405 / DSM 14222 / CIP 103919 / JCM 8153 / KCTC 15104)).